Reading from the N-terminus, the 67-residue chain is Large ribosomal subunit protein bL35 (67 aa).

Belongs to the bacterial ribosomal protein bL35 family.

This is Large ribosomal subunit protein bL35 from Bartonella quintana (strain Toulouse) (Rochalimaea quintana).